Reading from the N-terminus, the 109-residue chain is Ribonuclease P protein component (109 aa).

Belongs to the RnpA family. As to quaternary structure, consists of a catalytic RNA component (M1 or rnpB) and a protein subunit.

It catalyses the reaction Endonucleolytic cleavage of RNA, removing 5'-extranucleotides from tRNA precursor.. Its function is as follows. RNaseP catalyzes the removal of the 5'-leader sequence from pre-tRNA to produce the mature 5'-terminus. It can also cleave other RNA substrates such as 4.5S RNA. The protein component plays an auxiliary but essential role in vivo by binding to the 5'-leader sequence and broadening the substrate specificity of the ribozyme. The protein is Ribonuclease P protein component of Nitratiruptor sp. (strain SB155-2).